Consider the following 264-residue polypeptide: TLC domain-containing protein 4-B (264 aa).

The next 6 membrane-spanning stretches (helical) occupy residues 6 to 26 (VYVV…VSPV), 50 to 70 (LVST…LWYD), 84 to 104 (LVKL…LLLA), 110 to 130 (MGDV…GYVL), 169 to 189 (LVVA…IAVM), and 210 to 230 (LAIQ…NIIW). The 203-residue stretch at 41–243 (NKLNDWNSRL…IARGCYKVIT (203 aa)) folds into the TLC domain.

The protein belongs to the TLCD4 family.

Its subcellular location is the membrane. The chain is TLC domain-containing protein 4-B (tlcd4b) from Danio rerio (Zebrafish).